A 203-amino-acid chain; its full sequence is Thymidylate kinase (203 aa).

10-17 (GIDGAGKS) is a binding site for ATP.

The protein belongs to the thymidylate kinase family.

The enzyme catalyses dTMP + ATP = dTDP + ADP. Its function is as follows. Phosphorylation of dTMP to form dTDP in both de novo and salvage pathways of dTTP synthesis. This Cupriavidus pinatubonensis (strain JMP 134 / LMG 1197) (Cupriavidus necator (strain JMP 134)) protein is Thymidylate kinase.